The following is a 238-amino-acid chain: tRNA (guanine-N(7)-)-methyltransferase (238 aa).

S-adenosyl-L-methionine is bound by residues Glu-68, Glu-93, Asp-120, and Asp-143. Asp-143 is a catalytic residue. Residues Lys-147, Asp-179, and Thr-216–Glu-219 contribute to the substrate site.

Belongs to the class I-like SAM-binding methyltransferase superfamily. TrmB family.

The enzyme catalyses guanosine(46) in tRNA + S-adenosyl-L-methionine = N(7)-methylguanosine(46) in tRNA + S-adenosyl-L-homocysteine. Its pathway is tRNA modification; N(7)-methylguanine-tRNA biosynthesis. In terms of biological role, catalyzes the formation of N(7)-methylguanine at position 46 (m7G46) in tRNA. The protein is tRNA (guanine-N(7)-)-methyltransferase of Shewanella denitrificans (strain OS217 / ATCC BAA-1090 / DSM 15013).